The primary structure comprises 149 residues: Putative pre-16S rRNA nuclease (149 aa).

It belongs to the YqgF nuclease family.

It localises to the cytoplasm. In terms of biological role, could be a nuclease involved in processing of the 5'-end of pre-16S rRNA. This Synechococcus sp. (strain ATCC 27144 / PCC 6301 / SAUG 1402/1) (Anacystis nidulans) protein is Putative pre-16S rRNA nuclease.